We begin with the raw amino-acid sequence, 497 residues long: COP9 signalosome complex subunit 3 (497 aa).

The PCI domain occupies 233-408 (QAFDAFERCV…DGSPAYLTFL (176 aa)).

It belongs to the CSN3 family. In terms of assembly, component of the COP9 signalosome (CSN) complex.

Its subcellular location is the cytoplasm. It is found in the nucleus. Component of the COP9 signalosome (CSN) complex that acts as an regulator of the ubiquitin (Ubl) conjugation pathway by mediating the deneddylation of the cullin subunit of SCF-type E3 ubiquitin-protein ligase complexes. The CSN complex is involved in the regulation of the circadian clock through its control of the stability of the SCF(FWD1) complex. The polypeptide is COP9 signalosome complex subunit 3 (csn-3) (Neurospora crassa (strain ATCC 24698 / 74-OR23-1A / CBS 708.71 / DSM 1257 / FGSC 987)).